The primary structure comprises 265 residues: MDFLQSIILGIIQGITEFLPISSSAHLILMPILTGWDDQGVGFDLAVHVGTLLAVILYFRKDVSELFIDGLRSIAARQHVGQSRLGWAVVVGTIPACIAGILLLDYIDTALRAVGVIITTTVVFAVLLAAGDRFARGSRTLQDIGFKDAIIVGLAQAVALIPGTSRSGATITAGLFLGLNRESASKFSFFMAIPITAAAALVKLLTIASESIAVDWLGFLVGGIVSFLTAITAIHFFLKWLNAFGMWPYVIYRLVLAVVLYLLFF.

The next 8 membrane-spanning stretches (helical) occupy residues 1-21 (MDFL…FLPI), 39-59 (QGVG…ILYF), 87-107 (WAVV…LDYI), 110-130 (ALRA…LLAA), 144-164 (IGFK…IPGT), 187-207 (FSFF…LLTI), 217-237 (LGFL…IHFF), and 244-264 (FGMW…YLLF).

The protein belongs to the UppP family.

Its subcellular location is the cell inner membrane. The catalysed reaction is di-trans,octa-cis-undecaprenyl diphosphate + H2O = di-trans,octa-cis-undecaprenyl phosphate + phosphate + H(+). Its function is as follows. Catalyzes the dephosphorylation of undecaprenyl diphosphate (UPP). Confers resistance to bacitracin. This Idiomarina loihiensis (strain ATCC BAA-735 / DSM 15497 / L2-TR) protein is Undecaprenyl-diphosphatase.